Consider the following 924-residue polypeptide: Lon protease homolog 3, mitochondrial (924 aa).

The transit peptide at 1-63 (MMPKRFNTSG…PVQSLLLFRA (63 aa)) directs the protein to the mitochondrion. One can recognise a Lon N-terminal domain in the interval 112 to 325 (VIALPLPHKP…LTLELVKKQV (214 aa)). An ATP-binding site is contributed by 447-454 (GPPGVGKT). A Lon proteolytic domain is found at 738–922 (QTPVGVVMGL…EKIFDLAFNY (185 aa)). Residues Ser828 and Lys871 contribute to the active site.

Belongs to the peptidase S16 family. Homohexamer or homoheptamer. Organized in a ring with a central cavity.

The protein resides in the mitochondrion matrix. It catalyses the reaction Hydrolysis of proteins in presence of ATP.. In terms of biological role, ATP-dependent serine protease that mediates the selective degradation of misfolded, unassembled or oxidatively damaged polypeptides as well as certain short-lived regulatory proteins in the mitochondrial matrix. May also have a chaperone function in the assembly of inner membrane protein complexes. Participates in the regulation of mitochondrial gene expression and in the maintenance of the integrity of the mitochondrial genome. Binds to mitochondrial DNA in a site-specific manner. The sequence is that of Lon protease homolog 3, mitochondrial (LON3) from Arabidopsis thaliana (Mouse-ear cress).